A 323-amino-acid polypeptide reads, in one-letter code: Putative HTH-type transcriptional regulatory protein Hlac_0273 (323 aa).

Residues 132–189 enclose the HTH cro/C1-type domain; sequence LADEREERGWSLGRLATELGVSRRTVSKYEDGMNASIEVAIQLEDLFNEPFSSPVDVL. A DNA-binding region (H-T-H motif) is located at residues 143-162; the sequence is LGRLATELGVSRRTVSKYED. The interval 188 to 211 is disordered; the sequence is VLDGAGEVRDADPTPSAPETDPDD.

This Halorubrum lacusprofundi (strain ATCC 49239 / DSM 5036 / JCM 8891 / ACAM 34) protein is Putative HTH-type transcriptional regulatory protein Hlac_0273.